We begin with the raw amino-acid sequence, 192 residues long: Adenylate kinase (192 aa).

Glycine 10–threonine 15 serves as a coordination point for ATP. The segment at serine 30–valine 59 is NMP. AMP is bound by residues threonine 31, arginine 36, threonine 57 to valine 59, glycine 85 to arginine 88, and glutamine 92. The segment at lysine 126–aspartate 142 is LID. Arginine 127 is a binding site for ATP. The AMP site is built by arginine 139 and arginine 150. Residue isoleucine 178 coordinates ATP.

The protein belongs to the adenylate kinase family. In terms of assembly, monomer.

The protein localises to the cytoplasm. The enzyme catalyses AMP + ATP = 2 ADP. Its pathway is purine metabolism; AMP biosynthesis via salvage pathway; AMP from ADP: step 1/1. Functionally, catalyzes the reversible transfer of the terminal phosphate group between ATP and AMP. Plays an important role in cellular energy homeostasis and in adenine nucleotide metabolism. The polypeptide is Adenylate kinase (Bartonella henselae (strain ATCC 49882 / DSM 28221 / CCUG 30454 / Houston 1) (Rochalimaea henselae)).